We begin with the raw amino-acid sequence, 314 residues long: Ribosomal RNA small subunit methyltransferase H 2 (314 aa).

S-adenosyl-L-methionine-binding positions include 33 to 35 (AGH), aspartate 53, tyrosine 80, aspartate 101, and glutamine 108. Residues 293–314 (KELEENSRSKSAKLRVFEKNDL) are disordered.

The protein belongs to the methyltransferase superfamily. RsmH family.

Its subcellular location is the cytoplasm. The catalysed reaction is cytidine(1402) in 16S rRNA + S-adenosyl-L-methionine = N(4)-methylcytidine(1402) in 16S rRNA + S-adenosyl-L-homocysteine + H(+). In terms of biological role, specifically methylates the N4 position of cytidine in position 1402 (C1402) of 16S rRNA. The polypeptide is Ribosomal RNA small subunit methyltransferase H 2 (Agathobacter rectalis (strain ATCC 33656 / DSM 3377 / JCM 17463 / KCTC 5835 / VPI 0990) (Eubacterium rectale)).